A 1143-amino-acid chain; its full sequence is MNYMHLGRAGTGKTTQLIERVIDQLTEQPLGPSIYFIVPDQMSFEMERRIATDPRLSGLVRMEVMSLRRFAFHMIRDYGNQVIPFLDETGTQLLLRQVVEEAEEELKIFKRTKNMPGFYKGLDELIASFKRSLVNPDMLRQISGASPERSPKLNDLALIYERFTERISDKALHADDYFTTLIELLPKADLSDVSVFVDGFYEFSLQEQQVLLRLMELTKDMHLSFTLDVEDVYTKQSEFGVSQRCYMQLIEQMKERQIAHEDIYYGQTVKFQSTGLRMLEQALLSPGYPPTDEEVTGVTVSAAVNRQVETEAAVRKAIQLVRHDGYRFKDIAFLVRHLEPYADHLERAFQLYDIPYFLDQRESMVHHPIVELVHAVLEIVMTGYREESVFRLLKTELIPLPAEDPRLALDRLETFVLERGIKGSMWKKPWQLKRRLADEISLTDAELQEELELNEWRQFLVEAIEPLEKRFKASKTMSEYTRALYRFLEEHHMTDRLTVWKQQALEVNELSQAREHDQVYEAVLLLFEQLEAAAPEATLTTELFVQMVETGLESLRFSLVPPSLDQVIATDYVRGRLQQVKVVFLLGANDGLIPLVEDQSKLLSEGDHDFLHDQGIPVGKASLDVFDDELYYLYQGVTAPSESLHISYALVDEDGKALQPASIVKQIKHQLLQDRPVKTYFAEAGDHAPDDQLQFVTSPERAAAAAAIELRRLQRRYPIQPSWFDVYNRLLENGRGRERMALFSNALFYQNQAEPLPEDLARNLYGDTIKASVSRFETYNACSYKHFARYGLRLKERKLYKFEAPDIGNLFHGALNDLSMNIKASGKRWRELDDQSCSNLAKEAVEKVTPEIQNAILMSSNRFGYIKKKLTDVVEQTAKMLVKQAERSEFEPDLFEISFGNAMFPPLRFTLPDGTEIEFTGRIDRVDQATIGDQLYVRIVDYKSSAKELDFAEIYYGLAIQMLLYLKTVVEQSEVLFNQQAKPAGALYFHVKNPMMRGDLSADEIERNQLLLESYQMQGVIVENDEVLRAMDQIAYDERKKSPLVKVTFTKTGLHKSHTKGVVKEEELTALMDHAWDELKTSSQSMYAGDIAIDPFDYQERTPCTFCEYRSVCQFDQSLGNDYRQLNPLSEKEVLERLKEETE.

A UvrD-like helicase ATP-binding domain is found at methionine 1–threonine 274. Glycine 7–threonine 14 contributes to the ATP binding site. Residues glutamine 267 to aspartate 565 enclose the UvrD-like helicase C-terminal domain. [4Fe-4S] cluster-binding residues include cysteine 782, cysteine 1104, cysteine 1107, and cysteine 1113.

Belongs to the helicase family. AddB/RexB type 1 subfamily. Heterodimer of AddA and AddB. Mg(2+) serves as cofactor. [4Fe-4S] cluster is required as a cofactor.

The heterodimer acts as both an ATP-dependent DNA helicase and an ATP-dependent, dual-direction single-stranded exonuclease. Recognizes the chi site generating a DNA molecule suitable for the initiation of homologous recombination. The AddB subunit has 5' -&gt; 3' nuclease activity but not helicase activity. The sequence is that of ATP-dependent helicase/deoxyribonuclease subunit B from Exiguobacterium sibiricum (strain DSM 17290 / CCUG 55495 / CIP 109462 / JCM 13490 / 255-15).